The primary structure comprises 1317 residues: Toxin protein Tse5 (1317 aa).

Residues 395-419 are disordered; it reads GRETRRRRDGQGRMLEEESPGKARY. The span at 403 to 415 shows a compositional bias: basic and acidic residues; it reads DGQGRMLEEESPG.

Functionally, toxin secreted by the H1 type VI (H1-T6SS) secretion system that acts on bacterial target cells. The producing bacterium is protected by a cognate immunity protein. The chain is Toxin protein Tse5 from Pseudomonas aeruginosa (strain ATCC 15692 / DSM 22644 / CIP 104116 / JCM 14847 / LMG 12228 / 1C / PRS 101 / PAO1).